The primary structure comprises 370 residues: Capsular polysaccharide phosphotransferase (370 aa).

It belongs to the stealth family.

In terms of biological role, part of a capsular polysaccharide synthesis locus. In Actinobacillus suis, this protein is Capsular polysaccharide phosphotransferase.